Consider the following 310-residue polypeptide: Thioredoxin reductase (310 aa).

35 to 42 is an FAD binding site; that stretch reads ERGMPGGQ. A disulfide bond links C134 and C137. Residue 277-286 participates in FAD binding; that stretch reads DVRDKGLRQI.

The protein belongs to the class-II pyridine nucleotide-disulfide oxidoreductase family. As to quaternary structure, homodimer. The cofactor is FAD.

It is found in the cytoplasm. The enzyme catalyses [thioredoxin]-dithiol + NADP(+) = [thioredoxin]-disulfide + NADPH + H(+). In Staphylococcus epidermidis (strain ATCC 35984 / DSM 28319 / BCRC 17069 / CCUG 31568 / BM 3577 / RP62A), this protein is Thioredoxin reductase (trxB).